The sequence spans 454 residues: Probable 1,4-beta-D-glucan cellobiohydrolase C (454 aa).

Residues 1-19 form the signal peptide; it reads MKHLASSIALTLLLPAVQA. In terms of domain architecture, CBM1 spans 20 to 55; it reads QQTVWGQCGGQGWSGPTSCVAGAACSTLNPYYAQCI. Disulfide bonds link cysteine 27-cysteine 44 and cysteine 38-cysteine 54. Thr-rich linker stretches follow at residues 59 to 94 and 95 to 454; these read TATS…PTVT and ASGN…NPSF. The segment at 68-95 is disordered; it reads TTAATTTSQTTTKPTTTGPTTSAPTVTA. Residue aspartate 184 is part of the active site. Cystine bridges form between cysteine 185–cysteine 244 and cysteine 376–cysteine 423. Residue aspartate 230 is the Proton donor of the active site. Aspartate 409 serves as the catalytic Nucleophile. Residue asparagine 413 is glycosylated (N-linked (GlcNAc...) asparagine).

It belongs to the glycosyl hydrolase 6 (cellulase B) family.

The protein resides in the secreted. It carries out the reaction Hydrolysis of (1-&gt;4)-beta-D-glucosidic linkages in cellulose and cellotetraose, releasing cellobiose from the non-reducing ends of the chains.. The biological conversion of cellulose to glucose generally requires three types of hydrolytic enzymes: (1) Endoglucanases which cut internal beta-1,4-glucosidic bonds; (2) Exocellobiohydrolases that cut the disaccharide cellobiose from the non-reducing end of the cellulose polymer chain; (3) Beta-1,4-glucosidases which hydrolyze the cellobiose and other short cello-oligosaccharides to glucose. The chain is Probable 1,4-beta-D-glucan cellobiohydrolase C (cbhC) from Aspergillus fumigatus (strain CBS 144.89 / FGSC A1163 / CEA10) (Neosartorya fumigata).